We begin with the raw amino-acid sequence, 1312 residues long: MADTDHYITAGIIYYCQEKYHQHVQNLAREGLKKYSNDPVLQFFKIYGMLMEDRVQDAIRRLEPIKDDPTVVLCSTMALIYAHKRSERVDREAVADLENKLKETRKSAGPKALYYAGMFLWLMGRTDKAREYIDRMLKISNRSREGLVLRGWLDLSSEKESTVNKSIRYFEEGIQDNKDIFALIGKAQYFMAHQNYSGALDVINQIIVNYPPFLPALTLKMRLFLAQQDWDQTLETAQRILLKDGANIDAFQILTIHSVTREGSTEKALNYLRELINALDAAEPRNPMLHLHKILPISSLCGRNQPILKQVSVVIGRIFQTAPHAEVATALANNFILQGNVTEAAGWYATAMKLDGNHLEGLTGVIQCQILQGQLEEAEQQLDFLHEIQESIGGTKELCYIQALLASRQGKEEQIITELLKKAVELHYAAVRGLPLGVEYFEKLNPTFLINIVQEYLVLCPKQPKAPGEPLSPLLKQALSILTPVVSVAPALTEPLYYTAQIKYLAGNLEGAQGSLQRCIEVDTACADFHLLMAQIHYAQGKFAECSVSLETGVSHNFKVRERPLYHLIRARVLRKTGELQEAIKTLKMTMSLQEMKRGALKKSTWGSLNSSDKVSIYLELAELLRLNGEQHEATKIIQDAINEFGGTPEEIRIVVANADMAVAKGDVEMALNVLRDIAPNQPYYTEVKQKMAQIYLNNRKDKKLYIGCYRELCEQQPGPHTSVLLGDALMNIQEPEKALEVYNEALHKNPQDASLANRIGQALIKTHQYKKAVNYYEAAQKISGQDFLCCDLAELLIKLKQYSKAEAVLKQALAHEPVSDLTSMVTDAKCLGLLGTTYQNYKKEESADILNKALELQQRILKRVPMEQPEMAPAQKQATSEICVQLAEHYVDQRNYEQAANYYKEAMVYSQDSKVKLQLSRLYLMMGDLDSCENHCSALLENHSFKEEAAMMMADVMFRKQDYTKSIELFDQILEENPDNFAVLSKLIDLLRRSGNLSKAPMFFEKALANSSRTTLEPGYNYCKGLYCWYLGQPNDGLKYFNKARKDSEWGQNAISNMVQICLNPDNEIVGGEVFEAPDEADGLLGEKRESEMLGVRTAEKLLKEFHPRTLNGRNQLALLQNHCLMATKDKANVETALSAFTEMATSEKDNVCAILAVAQAYMILRQTPRARNQLKRLSKVPWSLADAEDLEKSWLLLADVYIKLGKYDIATELLKRCLLYNKSCYKAYEYLGFIMENEQSYKDAAANYRLAWDYSNQSNPAVGFRLAFNYLKDKKYVDAIDICHKVLKAHPTYPKIEREILAKAQTSLKP.

6 TPR repeats span residues 4–38 (TDHY…YSND), 110–143 (PKAL…SNRS), 147–180 (LVLR…NKDI), 182–213 (ALIG…YPPF), 214–247 (LPAL…DGAN), and 325–358 (AEVA…DGNH). Residues 365-392 (VIQCQILQGQLEEAEQQLDFLHEIQESI) are a coiled coil. TPR repeat units lie at residues 493-526 (TEPL…DTAC), 528-560 (DFHL…NFKV), 564-597 (PLYH…QEMK), 615-648 (VSIY…FGGT), 720-753 (PHTS…NPQD), 755-787 (SLAN…SGQD), 789-820 (LCCD…EPVS), 829-861 (AKCL…QQRI), 881-914 (SEIC…SQDS), 916-947 (VKLQ…HSFK), 948-981 (EEAA…NPDN), 983-1015 (AVLS…SSRT), 1019-1052 (PGYN…SEWG), 1193-1226 (EKSW…NKSC), 1228-1260 (KAYE…SNQS), and 1262-1295 (PAVG…HPTY).

This sequence belongs to the TTC21 family. In terms of assembly, component of the IFT complex A (IFT-A).

Its function is as follows. Component of the IFT complex A (IFT-A), a complex required for retrograde ciliary transport and entry into cilia of G protein-coupled receptors (GPCRs). Negatively modulates the SHH signal transduction. The chain is Tetratricopeptide repeat protein 21B (ttc21b) from Xenopus laevis (African clawed frog).